Reading from the N-terminus, the 5065-residue chain is Dynein heavy chain-like protein 1 (5065 aa).

A stem region spans residues 1–1957 (MELEKTHLIN…IIKMADATFE (1957 aa)). Positions 1677–1705 (QMEGFQKQLDRLSDSLSKIQKALGEYLEK) form a coiled coil. Residues 1958 to 2179 (YGYEYLGMCE…LRSLKSVLNS (222 aa)) are AAA 1. Position 1996-2003 (1996-2003 (GPAGTGKT)) interacts with ATP. The interval 2203-2223 (FNETLDNNNNNDNNNERKTTT) is disordered. Over residues 2204-2215 (NETLDNNNNNDN) the composition is skewed to low complexity. AAA stretches follow at residues 2281–2632 (NEIH…YEYI), 2751–3004 (DVDR…WKLA), and 3097–3367 (IFNE…GNRY). ATP is bound at residue 2319–2326 (GDVGTGKS). The tract at residues 2507–2529 (EKNQNGNENGNENEKKNINIINN) is disordered. ATP-binding positions include 2790-2797 (GPPGSGKT) and 3135-3142 (GASGAGKT). Residues 3386–3701 (IDEKKEEVSS…ETFINLEEAS (316 aa)) are stalk. Coiled coils occupy residues 3388-3466 (EKKE…LDEQ) and 3970-3997 (TMEKLKVQGAEASKEVNIAEEVMVEVEN). 2 AAA regions span residues 3754-3983 (LSRP…EASK) and 4289-4507 (FNKI…VVDS). A compositionally biased stretch (basic and acidic residues) spans 4686-4705 (KDKNKDEDKNKNKENDDNNK). The disordered stretch occupies residues 4686–4727 (KDKNKDEDKNKNKENDDNNKKHIGNNKLVISSSERTESETSE).

Belongs to the dynein heavy chain family. In terms of assembly, consists of at least two heavy chains and a number of intermediate and light chains.

Its subcellular location is the cytoplasm. The protein resides in the cytoskeleton. Functionally, acts as a motor for the intracellular retrograde motility of vesicles and organelles along microtubules. Dynein has ATPase activity; the force-producing power stroke is thought to occur on release of ADP. This chain is Dynein heavy chain-like protein 1, found in Plasmodium falciparum (isolate 3D7).